The sequence spans 547 residues: MAAKEVLFAGDARAKMLTGVNILANAVKVTLGPKGRNVVLDKSFGSPVITKDGVSVAKEIELEDKFENMGAQMVKEVASKANDAAGDGTTTATVLAQSIVNEGLKAVAAGMNPMDLKRGIDKAVIAAVAELKALSVPCSDTKAIAQVGTISANSDKEIGDIIAQAMEKVGRNSGVITVEEGQSLENELDVVEGMQFDRGYLSPYFINSPEKGTVELDNPFILLVDKKISNIRELLPTLEAVAKASKPLLIIAEDLEGEALATLVVNNMRGIVKVSAVKAPGFGDRRKAMLQDIAVLTGGTVISEEIGLELEKATVEDLGTAKRVIITKDDTTIIDGAGEEAGINGRVSQIKAQIEEATSDYDKEKLQERMAKLAGGVAVIKVGAATEMEMKEKKDRVEDALNATRAAVEEGVVPGGGVALVRAASKLVDLVGDNEDQNHGIKVALRAMEAPLRQIVTNAGDEASVVINAVKAGSGNFGYNAATGEYNDMIEMGILDPTKVTRSALQFAGSIAGLMITTEAMVAEIPKDDSAPDMGGMGGMGGMGGMM.

Residues 30–33 (TLGP), Lys51, 87–91 (DGTTT), Gly416, 480–482 (NAA), and Asp496 contribute to the ATP site.

The protein belongs to the chaperonin (HSP60) family. As to quaternary structure, forms a cylinder of 14 subunits composed of two heptameric rings stacked back-to-back. Interacts with the co-chaperonin GroES.

Its subcellular location is the cytoplasm. The enzyme catalyses ATP + H2O + a folded polypeptide = ADP + phosphate + an unfolded polypeptide.. Functionally, together with its co-chaperonin GroES, plays an essential role in assisting protein folding. The GroEL-GroES system forms a nano-cage that allows encapsulation of the non-native substrate proteins and provides a physical environment optimized to promote and accelerate protein folding. The chain is Chaperonin GroEL from Pseudoalteromonas translucida (strain TAC 125).